Reading from the N-terminus, the 139-residue chain is uncharacterized protein (139 aa).

This is an uncharacterized protein from Invertebrate iridescent virus 3 (IIV-3).